Here is a 25-residue protein sequence, read N- to C-terminus: Small ribosomal subunit protein eS32B (25 aa).

Residues 1–25 (MRAKWRKKRTRRLKRKRRKVRARSK) are disordered.

Belongs to the eukaryotic ribosomal protein eS32 family. Component of the small ribosomal subunit (SSU). Mature yeast ribosomes consist of a small (40S) and a large (60S) subunit. The 40S small subunit contains 1 molecule of ribosomal RNA (18S rRNA) and 33 different proteins (encoded by 57 genes). The large 60S subunit contains 3 rRNA molecules (25S, 5.8S and 5S rRNA) and 46 different proteins (encoded by 81 genes).

It localises to the cytoplasm. In terms of biological role, component of the ribosome, a large ribonucleoprotein complex responsible for the synthesis of proteins in the cell. The small ribosomal subunit (SSU) binds messenger RNAs (mRNAs) and translates the encoded message by selecting cognate aminoacyl-transfer RNA (tRNA) molecules. The large subunit (LSU) contains the ribosomal catalytic site termed the peptidyl transferase center (PTC), which catalyzes the formation of peptide bonds, thereby polymerizing the amino acids delivered by tRNAs into a polypeptide chain. The nascent polypeptides leave the ribosome through a tunnel in the LSU and interact with protein factors that function in enzymatic processing, targeting, and the membrane insertion of nascent chains at the exit of the ribosomal tunnel. The sequence is that of Small ribosomal subunit protein eS32B from Saccharomyces cerevisiae (strain ATCC 204508 / S288c) (Baker's yeast).